Reading from the N-terminus, the 586-residue chain is Protein NRT1/ PTR FAMILY 5.3 (586 aa).

The next 11 helical transmembrane spans lie at 77-97 (WVGT…AHFG), 100-120 (ITFV…TLSV), 141-161 (ASVI…IGTG), 189-209 (FFNW…TVLV), 217-237 (WAIG…IFLL), 334-354 (PVLF…TLFI), 370-390 (IPPA…IVIY), 408-428 (ITLL…MIIA), 449-469 (AVPI…MGLA), 492-512 (LGTS…SILL), and 538-558 (NYYM…LVVI).

The protein belongs to the major facilitator superfamily. Proton-dependent oligopeptide transporter (POT/PTR) (TC 2.A.17) family. As to expression, expressed in roots and siliques.

The protein resides in the membrane. Functionally, peptide transporter. The polypeptide is Protein NRT1/ PTR FAMILY 5.3 (NPF5.3) (Arabidopsis thaliana (Mouse-ear cress)).